Consider the following 491-residue polypeptide: Glutamyl-tRNA(Gln) amidotransferase subunit A (491 aa).

Serine 158 functions as the Charge relay system in the catalytic mechanism. Serine 182 (acyl-ester intermediate) is an active-site residue.

It belongs to the amidase family. GatA subfamily. In terms of assembly, heterotrimer of A, B and C subunits.

The enzyme catalyses L-glutamyl-tRNA(Gln) + L-glutamine + ATP + H2O = L-glutaminyl-tRNA(Gln) + L-glutamate + ADP + phosphate + H(+). Its function is as follows. Allows the formation of correctly charged Gln-tRNA(Gln) through the transamidation of misacylated Glu-tRNA(Gln) in organisms which lack glutaminyl-tRNA synthetase. The reaction takes place in the presence of glutamine and ATP through an activated gamma-phospho-Glu-tRNA(Gln). In Bradyrhizobium diazoefficiens (strain JCM 10833 / BCRC 13528 / IAM 13628 / NBRC 14792 / USDA 110), this protein is Glutamyl-tRNA(Gln) amidotransferase subunit A.